Here is a 438-residue protein sequence, read N- to C-terminus: DNA primase DnaG (438 aa).

Positions 169–243 (DSIIVVEGRA…DIDYVARAPY (75 aa)) constitute a Toprim domain. The Mg(2+) site is built by Glu-175, Asp-217, and Asp-219.

The protein belongs to the archaeal DnaG primase family. In terms of assembly, forms a ternary complex with MCM helicase and DNA. The cofactor is Mg(2+).

It catalyses the reaction ssDNA + n NTP = ssDNA/pppN(pN)n-1 hybrid + (n-1) diphosphate.. RNA polymerase that catalyzes the synthesis of short RNA molecules used as primers for DNA polymerase during DNA replication. The protein is DNA primase DnaG of Methanococcus maripaludis (strain C6 / ATCC BAA-1332).